The following is a 358-amino-acid chain: UDP-N-acetylglucosamine--N-acetylmuramyl-(pentapeptide) pyrophosphoryl-undecaprenol N-acetylglucosamine transferase (358 aa).

UDP-N-acetyl-alpha-D-glucosamine contacts are provided by residues 13–15 (TGG), Asn125, Arg162, Ser190, Ile244, 263–268 (ALTVAE), and Gln289.

The protein belongs to the glycosyltransferase 28 family. MurG subfamily.

It localises to the cell inner membrane. It carries out the reaction di-trans,octa-cis-undecaprenyl diphospho-N-acetyl-alpha-D-muramoyl-L-alanyl-D-glutamyl-meso-2,6-diaminopimeloyl-D-alanyl-D-alanine + UDP-N-acetyl-alpha-D-glucosamine = di-trans,octa-cis-undecaprenyl diphospho-[N-acetyl-alpha-D-glucosaminyl-(1-&gt;4)]-N-acetyl-alpha-D-muramoyl-L-alanyl-D-glutamyl-meso-2,6-diaminopimeloyl-D-alanyl-D-alanine + UDP + H(+). It functions in the pathway cell wall biogenesis; peptidoglycan biosynthesis. Cell wall formation. Catalyzes the transfer of a GlcNAc subunit on undecaprenyl-pyrophosphoryl-MurNAc-pentapeptide (lipid intermediate I) to form undecaprenyl-pyrophosphoryl-MurNAc-(pentapeptide)GlcNAc (lipid intermediate II). In Halorhodospira halophila (strain DSM 244 / SL1) (Ectothiorhodospira halophila (strain DSM 244 / SL1)), this protein is UDP-N-acetylglucosamine--N-acetylmuramyl-(pentapeptide) pyrophosphoryl-undecaprenol N-acetylglucosamine transferase.